We begin with the raw amino-acid sequence, 340 residues long: Ketol-acid reductoisomerase (NADP(+)) (340 aa).

Residues 3–182 (VQMEYEKDVK…GAARVGLLET (180 aa)) enclose the KARI N-terminal Rossmann domain. Residues 26–29 (YGSQ), arginine 49, serine 53, and 83–86 (DEIQ) contribute to the NADP(+) site. Residue histidine 108 is part of the active site. Glycine 134 provides a ligand contact to NADP(+). In terms of domain architecture, KARI C-terminal knotted spans 183 to 328 (TYKEETEEDL…AELRKAMPFV (146 aa)). Residues aspartate 191, glutamate 195, glutamate 227, and glutamate 231 each coordinate Mg(2+). Serine 252 lines the substrate pocket.

This sequence belongs to the ketol-acid reductoisomerase family. Mg(2+) serves as cofactor.

It carries out the reaction (2R)-2,3-dihydroxy-3-methylbutanoate + NADP(+) = (2S)-2-acetolactate + NADPH + H(+). The enzyme catalyses (2R,3R)-2,3-dihydroxy-3-methylpentanoate + NADP(+) = (S)-2-ethyl-2-hydroxy-3-oxobutanoate + NADPH + H(+). Its pathway is amino-acid biosynthesis; L-isoleucine biosynthesis; L-isoleucine from 2-oxobutanoate: step 2/4. It functions in the pathway amino-acid biosynthesis; L-valine biosynthesis; L-valine from pyruvate: step 2/4. Involved in the biosynthesis of branched-chain amino acids (BCAA). Catalyzes an alkyl-migration followed by a ketol-acid reduction of (S)-2-acetolactate (S2AL) to yield (R)-2,3-dihydroxy-isovalerate. In the isomerase reaction, S2AL is rearranged via a Mg-dependent methyl migration to produce 3-hydroxy-3-methyl-2-ketobutyrate (HMKB). In the reductase reaction, this 2-ketoacid undergoes a metal-dependent reduction by NADPH to yield (R)-2,3-dihydroxy-isovalerate. The polypeptide is Ketol-acid reductoisomerase (NADP(+)) (Streptococcus thermophilus (strain ATCC BAA-491 / LMD-9)).